Consider the following 467-residue polypeptide: Cell division protein FtsP (467 aa).

A signal peptide (tat-type signal) is located at residues 1 to 28 (MRSLTRRDFLKSGILASSLSCIPQSVMA).

It belongs to the FtsP family. In terms of processing, predicted to be exported by the Tat system. The position of the signal peptide cleavage has not been experimentally proven.

The protein localises to the periplasm. Its function is as follows. Cell division protein that is required for growth during stress conditions. May be involved in protecting or stabilizing the divisomal assembly under conditions of stress. In Histophilus somni (strain 2336) (Haemophilus somnus), this protein is Cell division protein FtsP.